A 211-amino-acid polypeptide reads, in one-letter code: Urease accessory protein UreF (211 aa).

The disordered stretch occupies residues 68–93 (LAPDGADRETDARTPSPAARDASRSQ).

The protein belongs to the UreF family. In terms of assembly, ureD, UreF and UreG form a complex that acts as a GTP-hydrolysis-dependent molecular chaperone, activating the urease apoprotein by helping to assemble the nickel containing metallocenter of UreC. The UreE protein probably delivers the nickel.

The protein resides in the cytoplasm. Its function is as follows. Required for maturation of urease via the functional incorporation of the urease nickel metallocenter. This Mycobacterium marinum (strain ATCC BAA-535 / M) protein is Urease accessory protein UreF.